Here is a 108-residue protein sequence, read N- to C-terminus: UPF0060 membrane protein Nham_2004 (108 aa).

A run of 4 helical transmembrane segments spans residues A5–L25, V31–V51, A61–L81, and L88–I108.

Belongs to the UPF0060 family.

It is found in the cell inner membrane. This Nitrobacter hamburgensis (strain DSM 10229 / NCIMB 13809 / X14) protein is UPF0060 membrane protein Nham_2004.